Consider the following 478-residue polypeptide: Sulfate adenylyltransferase subunit 1 (478 aa).

Residues 24-240 (KSLLRFLTCG…VLENVDIDAD (217 aa)) form the tr-type G domain. Residues 33 to 40 (GSVDDGKS) form a G1 region. Residue 33–40 (GSVDDGKS) participates in GTP binding. A G2 region spans residues 91–95 (GITID). The G3 stretch occupies residues 112 to 115 (DTPG). GTP contacts are provided by residues 112–116 (DTPGH) and 167–170 (NKMD). The tract at residues 167 to 170 (NKMD) is G4. Residues 206 to 208 (SAL) form a G5 region.

It belongs to the TRAFAC class translation factor GTPase superfamily. Classic translation factor GTPase family. CysN/NodQ subfamily. In terms of assembly, heterodimer composed of CysD, the smaller subunit, and CysN.

The enzyme catalyses sulfate + ATP + H(+) = adenosine 5'-phosphosulfate + diphosphate. Its pathway is sulfur metabolism; hydrogen sulfide biosynthesis; sulfite from sulfate: step 1/3. With CysD forms the ATP sulfurylase (ATPS) that catalyzes the adenylation of sulfate producing adenosine 5'-phosphosulfate (APS) and diphosphate, the first enzymatic step in sulfur assimilation pathway. APS synthesis involves the formation of a high-energy phosphoric-sulfuric acid anhydride bond driven by GTP hydrolysis by CysN coupled to ATP hydrolysis by CysD. In Aliivibrio fischeri (strain MJ11) (Vibrio fischeri), this protein is Sulfate adenylyltransferase subunit 1.